The sequence spans 709 residues: Phosphoribosylformylglycinamidine synthase subunit PurL (709 aa).

Histidine 36 is a catalytic residue. Residues tyrosine 39 and lysine 80 each contribute to the ATP site. Glutamate 82 lines the Mg(2+) pocket. Substrate is bound by residues 83 to 86 (SHNH) and arginine 105. Residue histidine 84 is the Proton acceptor of the active site. Aspartate 106 is a Mg(2+) binding site. Glutamine 226 contacts substrate. Aspartate 252 contributes to the Mg(2+) binding site. 294-296 (ETQ) contributes to the substrate binding site. 2 residues coordinate ATP: aspartate 470 and glycine 507. Residue serine 510 participates in substrate binding.

Belongs to the FGAMS family. In terms of assembly, monomer. Part of the FGAM synthase complex composed of 1 PurL, 1 PurQ and 2 PurS subunits.

It is found in the cytoplasm. It carries out the reaction N(2)-formyl-N(1)-(5-phospho-beta-D-ribosyl)glycinamide + L-glutamine + ATP + H2O = 2-formamido-N(1)-(5-O-phospho-beta-D-ribosyl)acetamidine + L-glutamate + ADP + phosphate + H(+). It functions in the pathway purine metabolism; IMP biosynthesis via de novo pathway; 5-amino-1-(5-phospho-D-ribosyl)imidazole from N(2)-formyl-N(1)-(5-phospho-D-ribosyl)glycinamide: step 1/2. In terms of biological role, part of the phosphoribosylformylglycinamidine synthase complex involved in the purines biosynthetic pathway. Catalyzes the ATP-dependent conversion of formylglycinamide ribonucleotide (FGAR) and glutamine to yield formylglycinamidine ribonucleotide (FGAM) and glutamate. The FGAM synthase complex is composed of three subunits. PurQ produces an ammonia molecule by converting glutamine to glutamate. PurL transfers the ammonia molecule to FGAR to form FGAM in an ATP-dependent manner. PurS interacts with PurQ and PurL and is thought to assist in the transfer of the ammonia molecule from PurQ to PurL. This chain is Phosphoribosylformylglycinamidine synthase subunit PurL, found in Saccharolobus islandicus (strain M.16.27) (Sulfolobus islandicus).